The primary structure comprises 446 residues: Histone acetyltransferase type B subunit 2 (446 aa).

WD repeat units lie at residues 138–178 (DHPG…ITPS), 189–229 (GHKE…GTSK), 231–270 (LKYS…QIID), 286–326 (GHSD…SKVH), and 330–370 (GHQD…DEQT). The tract at residues 372–376 (DDAED) is interaction with the histone H4 N-terminus. The stretch at 387–427 (GHTNHLADFSWNRNDPWLVCSAAEDNLLQIWKVANSIVSKE) is one WD 6 repeat. The segment at 427 to 446 (EPADMSTPELDDPKPKQSSH) is disordered. Residues 437–446 (DDPKPKQSSH) are compositionally biased toward basic and acidic residues.

The protein belongs to the WD repeat RBAP46/RBAP48/MSI1 family. Component of the HAT-B complex composed of at least hat-1 and hat-2. The HAT-B complex binds to histone H4 tail.

The protein localises to the cytoplasm. It is found in the nucleus. Its function is as follows. Regulatory subunit of the histone acetylase B (HAT-B) complex. The complex acetylates 'Lys-12' of histone H4 which is required for telomeric silencing. This Neurospora crassa (strain ATCC 24698 / 74-OR23-1A / CBS 708.71 / DSM 1257 / FGSC 987) protein is Histone acetyltransferase type B subunit 2 (hat-2).